The primary structure comprises 232 residues: Phosphatidylserine decarboxylase proenzyme (232 aa).

Residue serine 190 is the Schiff-base intermediate with substrate; via pyruvic acid of the active site. Serine 190 is subject to Pyruvic acid (Ser); by autocatalysis.

It belongs to the phosphatidylserine decarboxylase family. PSD-A subfamily. Heterodimer of a large membrane-associated beta subunit and a small pyruvoyl-containing alpha subunit. Pyruvate serves as cofactor. Post-translationally, is synthesized initially as an inactive proenzyme. Formation of the active enzyme involves a self-maturation process in which the active site pyruvoyl group is generated from an internal serine residue via an autocatalytic post-translational modification. Two non-identical subunits are generated from the proenzyme in this reaction, and the pyruvate is formed at the N-terminus of the alpha chain, which is derived from the carboxyl end of the proenzyme. The post-translation cleavage follows an unusual pathway, termed non-hydrolytic serinolysis, in which the side chain hydroxyl group of the serine supplies its oxygen atom to form the C-terminus of the beta chain, while the remainder of the serine residue undergoes an oxidative deamination to produce ammonia and the pyruvoyl prosthetic group on the alpha chain.

It is found in the cell membrane. The enzyme catalyses a 1,2-diacyl-sn-glycero-3-phospho-L-serine + H(+) = a 1,2-diacyl-sn-glycero-3-phosphoethanolamine + CO2. Its pathway is phospholipid metabolism; phosphatidylethanolamine biosynthesis; phosphatidylethanolamine from CDP-diacylglycerol: step 2/2. Catalyzes the formation of phosphatidylethanolamine (PtdEtn) from phosphatidylserine (PtdSer). The protein is Phosphatidylserine decarboxylase proenzyme of Cereibacter sphaeroides (strain KD131 / KCTC 12085) (Rhodobacter sphaeroides).